Reading from the N-terminus, the 587-residue chain is 2-succinyl-5-enolpyruvyl-6-hydroxy-3-cyclohexene-1-carboxylate synthase (587 aa).

This sequence belongs to the TPP enzyme family. MenD subfamily. In terms of assembly, homodimer. Mg(2+) serves as cofactor. The cofactor is Mn(2+). Requires thiamine diphosphate as cofactor.

It carries out the reaction isochorismate + 2-oxoglutarate + H(+) = 5-enolpyruvoyl-6-hydroxy-2-succinyl-cyclohex-3-ene-1-carboxylate + CO2. It participates in quinol/quinone metabolism; 1,4-dihydroxy-2-naphthoate biosynthesis; 1,4-dihydroxy-2-naphthoate from chorismate: step 2/7. It functions in the pathway cofactor biosynthesis; phylloquinone biosynthesis. Catalyzes the thiamine diphosphate-dependent decarboxylation of 2-oxoglutarate and the subsequent addition of the resulting succinic semialdehyde-thiamine pyrophosphate anion to isochorismate to yield 2-succinyl-5-enolpyruvyl-6-hydroxy-3-cyclohexene-1-carboxylate (SEPHCHC). The polypeptide is 2-succinyl-5-enolpyruvyl-6-hydroxy-3-cyclohexene-1-carboxylate synthase (Prochlorococcus marinus (strain AS9601)).